We begin with the raw amino-acid sequence, 479 residues long: Anaerobic nitric oxide reductase flavorubredoxin (479 aa).

Residues 30–210 (LRGSSYNSYL…PFSRLVTPKI (181 aa)) are zinc metallo-hydrolase. The Fe cation site is built by histidine 79, glutamate 81, aspartate 83, histidine 147, aspartate 166, and histidine 227. The 140-residue stretch at 254–393 (ITIFYDTMSN…LCREHGREIA (140 aa)) folds into the Flavodoxin-like domain. FMN-binding positions include 260–264 (TMSNN) and 342–369 (AFGS…EMSL). Positions 423–474 (GPRMQCSVCQWIYDPAKGEPMQDVAPGTPWSEVPDNFLCPECSLGKDVFDEL) constitute a Rubredoxin-like domain. Fe cation is bound by residues cysteine 428, cysteine 431, cysteine 461, and cysteine 464.

It in the N-terminal section; belongs to the zinc metallo-hydrolase group 3 family. In terms of assembly, homotetramer. Requires Fe cation as cofactor. It depends on FMN as a cofactor.

It localises to the cytoplasm. The protein operates within nitrogen metabolism; nitric oxide reduction. In terms of biological role, anaerobic nitric oxide reductase; uses NADH to detoxify nitric oxide (NO), protecting several 4Fe-4S NO-sensitive enzymes. Has at least 2 reductase partners, only one of which (NorW, flavorubredoxin reductase) has been identified. NO probably binds to the di-iron center; electrons enter from the NorW at rubredoxin and are transferred sequentially to the FMN center and the di-iron center. Also able to function as an aerobic oxygen reductase. This is Anaerobic nitric oxide reductase flavorubredoxin from Shigella flexneri serotype 5b (strain 8401).